A 395-amino-acid chain; its full sequence is MSAEMTDLNFAEGRPLLVDKDGITVLLQEYVTQEHDIETAHGIVHVTMCGTPKLNRPVILTYHDIGLNHKTCFNSLFNFEDMHEITQHFSVCHVDAPGQQEGAASFPAGYMYPSMDQLAEMLPGVIQQLGLKSVLGLGIGAGAYILTRFALNHPSMVEGLVLININPCAEGWMDWAATKISGWTHALPDMVISHLFSKDEVHSNHELVETYRQHIVQDINQNNLQLFVKSYNSRRDLEIERPFPGSNTVTLKCPALLVVGDSSPAVDAVVDCNSKLDPTKTTLLKMSDCGGFPQVVQPAKLAEAFKYFVQGMGYMPAASMTRLMRSRTGSAASSSSQDGNRSRSHTNEGSRSRSHTGDGNRSRAHTGDGNRSRSHTDSNNTNSEHNTPKSMEISC.

The tract at residues 325 to 395 (RSRTGSAASS…NTPKSMEISC (71 aa)) is disordered. The span at 326 to 339 (SRTGSAASSSSQDG) shows a compositional bias: low complexity. 4 consecutive repeat copies span residues 339-348 (GNRSRSHTNE), 349-358 (GSRSRSHTGD), 359-368 (GNRSRAHTGD), and 369-378 (GNRSRSHTDS). The tract at residues 339-378 (GNRSRSHTNEGSRSRSHTGDGNRSRAHTGDGNRSRSHTDS) is 4 X 10 AA tandem repeats of G-[NS]-R-S-R-[AS]-H-T-[DGN]-[DES]. Residues 345–376 (HTNEGSRSRSHTGDGNRSRAHTGDGNRSRSHT) are compositionally biased toward basic and acidic residues. The segment covering 377 to 389 (DSNNTNSEHNTPK) has biased composition (polar residues).

It belongs to the NDRG family.

In terms of biological role, may be involved in pronephros development, after specification of the pronephros. The chain is Protein NDRG1 from Xenopus tropicalis (Western clawed frog).